Reading from the N-terminus, the 150-residue chain is Cytochrome c oxidase subunit 5A, mitochondrial (150 aa).

The transit peptide at 1-41 (MLGTALRRCAVAAASRAGSRGLLHPTPVPGPTAAIQSIRCY) directs the protein to the mitochondrion. The short motif at 2–17 (LGTALRRCAVAAASRA) is the SIFI-degron element. Residues Lys87 and Lys113 each carry the N6-acetyllysine modification. Position 141 is a phosphothreonine (Thr141).

The protein belongs to the cytochrome c oxidase subunit 5A family. In terms of assembly, component of the cytochrome c oxidase (complex IV, CIV), a multisubunit enzyme composed of 14 subunits. The complex is composed of a catalytic core of 3 subunits MT-CO1, MT-CO2 and MT-CO3, encoded in the mitochondrial DNA, and 11 supernumerary subunits COX4I, COX5A, COX5B, COX6A, COX6B, COX6C, COX7A, COX7B, COX7C, COX8 and NDUFA4, which are encoded in the nuclear genome. The complex exists as a monomer or a dimer and forms supercomplexes (SCs) in the inner mitochondrial membrane with NADH-ubiquinone oxidoreductase (complex I, CI) and ubiquinol-cytochrome c oxidoreductase (cytochrome b-c1 complex, complex III, CIII), resulting in different assemblies (supercomplex SCI(1)III(2)IV(1) and megacomplex MCI(2)III(2)IV(2)). Interacts with AFG1L. Interacts with RAB5IF. Post-translationally, in response to mitochondrial stress, the precursor protein is ubiquitinated by the SIFI complex in the cytoplasm before mitochondrial import, leading to its degradation. Within the SIFI complex, UBR4 initiates ubiquitin chain that are further elongated or branched by KCMF1.

It localises to the mitochondrion inner membrane. It functions in the pathway energy metabolism; oxidative phosphorylation. Functionally, component of the cytochrome c oxidase, the last enzyme in the mitochondrial electron transport chain which drives oxidative phosphorylation. The respiratory chain contains 3 multisubunit complexes succinate dehydrogenase (complex II, CII), ubiquinol-cytochrome c oxidoreductase (cytochrome b-c1 complex, complex III, CIII) and cytochrome c oxidase (complex IV, CIV), that cooperate to transfer electrons derived from NADH and succinate to molecular oxygen, creating an electrochemical gradient over the inner membrane that drives transmembrane transport and the ATP synthase. Cytochrome c oxidase is the component of the respiratory chain that catalyzes the reduction of oxygen to water. Electrons originating from reduced cytochrome c in the intermembrane space (IMS) are transferred via the dinuclear copper A center (CU(A)) of subunit 2 and heme A of subunit 1 to the active site in subunit 1, a binuclear center (BNC) formed by heme A3 and copper B (CU(B)). The BNC reduces molecular oxygen to 2 water molecules using 4 electrons from cytochrome c in the IMS and 4 protons from the mitochondrial matrix. The polypeptide is Cytochrome c oxidase subunit 5A, mitochondrial (COX5A) (Otolemur crassicaudatus (Brown greater galago)).